The chain runs to 242 residues: HTH-type transcriptional regulator GadW (242 aa).

The region spanning glycine 139–histidine 236 is the HTH araC/xylS-type domain. DNA-binding regions (H-T-H motif) lie at residues arginine 156–asparagine 177 and leucine 203–tyrosine 226.

Homodimer.

Functionally, depending on the conditions (growth phase and medium), acts as a positive or negative regulator of gadA and gadBC. Repression occurs directly or via the repression of the expression of gadX. Activation occurs directly by the binding of GadW to the gadA and gadBC promoters. The sequence is that of HTH-type transcriptional regulator GadW (gadW) from Escherichia coli (strain K12).